We begin with the raw amino-acid sequence, 508 residues long: Glycogen synthase (508 aa).

Lys-27 serves as a coordination point for ADP-alpha-D-glucose.

This sequence belongs to the glycosyltransferase 1 family. Bacterial/plant glycogen synthase subfamily.

The enzyme catalyses [(1-&gt;4)-alpha-D-glucosyl](n) + ADP-alpha-D-glucose = [(1-&gt;4)-alpha-D-glucosyl](n+1) + ADP + H(+). It participates in glycan biosynthesis; glycogen biosynthesis. Functionally, synthesizes alpha-1,4-glucan chains using ADP-glucose. This chain is Glycogen synthase, found in Photobacterium profundum (strain SS9).